The chain runs to 600 residues: Epidermal growth factor receptor kinase substrate 8-like protein 3 (600 aa).

Residues glutamine 28–proline 155 form the PTB domain. Disordered regions lie at residues glutamate 152–aspartate 245 and leucine 429–serine 452. Residues serine 204–serine 214 show a composition bias toward low complexity. Serine 238 bears the Phosphoserine mark. The SH3 domain occupies arginine 457–alanine 516.

Belongs to the EPS8 family. In terms of assembly, interacts with ABI1. Part of a complex that contains SOS1, ABI1 and EPS8L2. Interacts with FASLG. As to expression, detected in embryonic gut. Detected in adult testis, placenta, adrenal gland and intestine.

Its subcellular location is the cytoplasm. In Mus musculus (Mouse), this protein is Epidermal growth factor receptor kinase substrate 8-like protein 3 (Eps8l3).